Reading from the N-terminus, the 156-residue chain is Small ribosomal subunit protein uS7 (156 aa).

This sequence belongs to the universal ribosomal protein uS7 family. In terms of assembly, part of the 30S ribosomal subunit. Contacts proteins S9 and S11.

One of the primary rRNA binding proteins, it binds directly to 16S rRNA where it nucleates assembly of the head domain of the 30S subunit. Is located at the subunit interface close to the decoding center, probably blocks exit of the E-site tRNA. The chain is Small ribosomal subunit protein uS7 from Vibrio atlanticus (strain LGP32) (Vibrio splendidus (strain Mel32)).